A 400-amino-acid chain; its full sequence is 3-phenylpropionate/cinnamic acid dioxygenase ferredoxin--NAD(+) reductase component (400 aa).

Residue T5 to D36 participates in FAD binding. S146–E174 provides a ligand contact to NAD(+).

It belongs to the bacterial ring-hydroxylating dioxygenase ferredoxin reductase family. This dioxygenase system consists of four proteins: the two subunits of the hydroxylase component (HcaE and HcaF), a ferredoxin (HcaC) and a ferredoxin reductase (HcaD). FAD serves as cofactor.

It carries out the reaction 2 reduced [2Fe-2S]-[ferredoxin] + NAD(+) + H(+) = 2 oxidized [2Fe-2S]-[ferredoxin] + NADH. The protein operates within aromatic compound metabolism; 3-phenylpropanoate degradation. Its function is as follows. Part of the multicomponent 3-phenylpropionate dioxygenase, that converts 3-phenylpropionic acid (PP) and cinnamic acid (CI) into 3-phenylpropionate-dihydrodiol (PP-dihydrodiol) and cinnamic acid-dihydrodiol (CI-dihydrodiol), respectively. This is 3-phenylpropionate/cinnamic acid dioxygenase ferredoxin--NAD(+) reductase component from Escherichia coli O157:H7.